We begin with the raw amino-acid sequence, 66 residues long: Brevinin-1CDYd (66 aa).

Positions 1 to 22 (MFTLKKSLLILFFLGTINFSLC) are cleaved as a signal peptide. Positions 23 to 44 (EEERNAEEERRDDPEERDVEVE) are excised as a propeptide. A disulfide bridge connects residues C60 and C66.

This sequence belongs to the frog skin active peptide (FSAP) family. Brevinin subfamily. In terms of tissue distribution, expressed by the skin glands.

The protein resides in the secreted. Antimicrobial peptide. This chain is Brevinin-1CDYd, found in Rana dybowskii (Dybovsky's frog).